Here is a 557-residue protein sequence, read N- to C-terminus: Urocanate hydratase (557 aa).

Residues 53-54 (GG), Q131, 177-179 (GMG), 197-202 (ECQQSR), 243-244 (NA), 264-268 (QTSAH), 274-275 (YL), and 323-324 (YG) each bind NAD(+). Residue C411 is part of the active site. NAD(+) contacts are provided by residues 455–456 (RE) and G493.

In terms of assembly, homodimer. NAD(+) is required as a cofactor.

The protein localises to the cytoplasm. It catalyses the reaction 4-imidazolone-5-propanoate = trans-urocanate + H2O. Its pathway is amino-acid degradation; L-histidine degradation into L-glutamate; N-formimidoyl-L-glutamate from L-histidine: step 2/3. Functionally, catalyzes the conversion of urocanate to 4-imidazolone-5-propionate. This chain is Urocanate hydratase, found in Pseudomonas putida (Arthrobacter siderocapsulatus).